A 1145-amino-acid chain; its full sequence is Adenylate cyclase type 3 (1145 aa).

Residues 1-79 (MPRNQGFSDP…FKRQRHETLL (79 aa)) are Cytoplasmic-facing. Helical transmembrane passes span 80–100 (VLVV…AVVF), 105–125 (LAPL…FVLC), 139–159 (VPYL…GLNF), 173–193 (AFFV…IVII), and 226–246 (ILAN…SYYM). Mg(2+)-binding residues include D324, I325, and D368. ATP is bound by residues 324–329 (DIVGFT) and 366–368 (LGD). The helical transmembrane segment at 381–401 (EDHAVCSILMGLAMVEAISYV) threads the bilayer. The Cytoplasmic segment spans residues 402 to 631 (REKTKTGVDM…RYSVEKEKQS (230 aa)). R412 contacts ATP. K465 participates in a covalent cross-link: Glycyl lysine isopeptide (Lys-Gly) (interchain with G-Cter in SUMO3). Positions 504–564 (QNGLNGSAVP…DNPSFPNPRR (61 aa)) are disordered. Composition is skewed to low complexity over residues 516-526 (APASSKPSSPA) and 535-544 (GSAHASGSTS). S524 is modified (phosphoserine). S579 carries the phosphoserine modification. 3 helical membrane passes run 632–652 (GAAF…EILI), 663–683 (FVVG…AIFP), and 707–727 (WAML…LSCL). N735 is a glycosylation site (N-linked (GlcNAc...) asparagine). The next 3 helical transmembrane spans lie at 753–773 (YNYV…VSHM), 774–794 (VKLT…LYAW), and 834–854 (LPLV…MLSF). Over 855–1145 (YYFSRHVEKL…TLPHQVVDNP (291 aa)) the chain is Cytoplasmic. Residues K976, 1063-1065 (DIW), and 1070-1074 (NVASR) contribute to the ATP site. Residue S1077 is modified to Phosphoserine; by CaMK2. Residue K1110 coordinates ATP.

This sequence belongs to the adenylyl cyclase class-4/guanylyl cyclase family. It depends on Mg(2+) as a cofactor. The cofactor is Mn(2+). In terms of processing, N-glycosylated. Post-translationally, rapidly phosphorylated after stimulation by odorants or forskolin. Phosphorylation by CaMK2 at Ser-1077 down-regulates enzyme activity. Sumoylated. Sumoylation is required for targeting of olfactory cilia. Detected in the acrosomal region of epididymal spermatozoa, the acrosomal region of round spermatids and in elongating spermatids. Detected in cilia in the olfactory epithelium (at protein level). Detected in olfactory epithelium neurons. Detected in brain, testis, late pachytene spermatocytes, round spermatids and elongating spermatids.

The protein resides in the cell membrane. It localises to the cell projection. Its subcellular location is the cilium. The protein localises to the golgi apparatus. It is found in the cytoplasm. It catalyses the reaction ATP = 3',5'-cyclic AMP + diphosphate. Its activity is regulated as follows. Specifically activated by the G alpha protein GNAL/G(olf) in signaling cascades triggered by odorant receptors. Activated by forskolin. After forskolin treatment, activity is further increased by calcium/calmodulin. In the absence of forskolin, calcium/calmodulin has little effect on enzyme activity. Catalyzes the formation of the signaling molecule cAMP in response to G-protein signaling. Participates in signaling cascades triggered by odorant receptors via its function in cAMP biosynthesis: specifically activated by G alpha protein GNAL/G(olf) in olfactory epithelium. Required for the perception of odorants. Required for normal sperm motility and normal male fertility. Plays a role in regulating insulin levels and body fat accumulation in response to a high fat diet. In Mus musculus (Mouse), this protein is Adenylate cyclase type 3 (Adcy3).